Consider the following 481-residue polypeptide: Zinc metalloproteinase/disintegrin (481 aa).

Positions 1–20 are cleaved as a signal peptide; the sequence is MIQVLLVTICLAVFPYQGSS. Residues 21–190 constitute a propeptide that is removed on maturation; the sequence is IILESGNVDD…KASQLYLTPE (170 aa). Residues 197-392 enclose the Peptidase M12B domain; the sequence is RHIELAIVVD…KKPQCILNAP (196 aa). 2 residues coordinate Ca(2+): Glu-200 and Asp-284. 3 cysteine pairs are disulfide-bonded: Cys-308–Cys-387, Cys-349–Cys-371, and Cys-351–Cys-354. Position 333 (His-333) interacts with Zn(2+). Glu-334 is a catalytic residue. Zn(2+)-binding residues include His-337 and His-343. Ca(2+) contacts are provided by Cys-387 and Asn-390. Positions 393–410 are excised as a propeptide; that stretch reads LRTDTVSTPISGNEFLEA. The region spanning 400-481 is the Disintegrin domain; the sequence is TPISGNEFLE…ADCPRNGLYG (82 aa). Cystine bridges form between Cys-414-Cys-429, Cys-416-Cys-424, Cys-423-Cys-446, Cys-437-Cys-443, Cys-442-Cys-467, and Cys-455-Cys-474. A Cell attachment site motif is present at residues 459–461; sequence RGD.

It belongs to the venom metalloproteinase (M12B) family. P-II subfamily. P-IIa sub-subfamily. As to quaternary structure, monomer. Zn(2+) serves as cofactor. As to expression, expressed by the venom gland.

The protein resides in the secreted. Impairs hemostasis in the envenomed animal. Functionally, inhibits platelet aggregation induced by ADP and collagen. Acts by inhibiting fibrinogen interaction with platelet receptors GPIIb/GPIIIa (ITGA2B/ITGB3). Has antitumor-growth activity. The protein is Zinc metalloproteinase/disintegrin of Protobothrops jerdonii (Jerdon's pitviper).